The primary structure comprises 280 residues: Putative ABC transporter ATP-binding protein MTH_133 (280 aa).

Residues 6 to 241 (IEAVDIRYTY…IDTIRGANLR (236 aa)) enclose the ABC transporter domain. 39 to 46 (GPNGAGKS) is an ATP binding site.

The protein belongs to the ABC transporter superfamily.

Its subcellular location is the cell membrane. In terms of biological role, probably part of an ABC transporter complex. Responsible for energy coupling to the transport system. The polypeptide is Putative ABC transporter ATP-binding protein MTH_133 (Methanothermobacter thermautotrophicus (strain ATCC 29096 / DSM 1053 / JCM 10044 / NBRC 100330 / Delta H) (Methanobacterium thermoautotrophicum)).